A 943-amino-acid chain; its full sequence is WD repeat-containing protein 3 (943 aa).

5 WD repeats span residues 21-60 (SQKG…KILI), 63-102 (GLKQ…GNVT), 105-144 (GHKA…GLYR), 147-186 (GHKD…CFKT), and 189-228 (GHRT…EIED). Phosphoserine occurs at positions 240 and 241. The residue at position 257 (threonine 257) is a Phosphothreonine. A WD 6 repeat occupies 277–316 (EGRDRVVNLAVDKTGRILACHGTDSVLELFCILSKKEIQK). Residues 326–345 (RKKAKLHSSKGEEEDPEVNV) form a disordered region. 7 WD repeats span residues 413 to 451 (GHRS…CIRT), 453 to 493 (TCEY…ETID), 494 to 533 (AHDG…DENS), 547 to 586 (QLDE…FFLS), 589 to 630 (GHKL…KSLF), 631 to 670 (AHDD…HIQT), and 673 to 712 (GHHQ…LILE). Glycyl lysine isopeptide (Lys-Gly) (interchain with G-Cter in SUMO2) cross-links involve residues lysine 474 and lysine 529. Serine 726 is modified (phosphoserine).

Belongs to the WD repeat WDR3/UTP12 family. As to quaternary structure, part of the small subunit (SSU) processome, composed of more than 70 proteins and the RNA chaperone small nucleolar RNA (snoRNA) U3. As to expression, ubiquitous.

It localises to the nucleus. The protein localises to the nucleolus. In terms of biological role, part of the small subunit (SSU) processome, first precursor of the small eukaryotic ribosomal subunit. During the assembly of the SSU processome in the nucleolus, many ribosome biogenesis factors, an RNA chaperone and ribosomal proteins associate with the nascent pre-rRNA and work in concert to generate RNA folding, modifications, rearrangements and cleavage as well as targeted degradation of pre-ribosomal RNA by the RNA exosome. This chain is WD repeat-containing protein 3, found in Homo sapiens (Human).